The chain runs to 229 residues: Uracil-DNA glycosylase (229 aa).

The active-site Proton acceptor is the Asp-65.

It belongs to the uracil-DNA glycosylase (UDG) superfamily. UNG family.

The protein resides in the cytoplasm. The catalysed reaction is Hydrolyzes single-stranded DNA or mismatched double-stranded DNA and polynucleotides, releasing free uracil.. Its function is as follows. Excises uracil residues from the DNA which can arise as a result of misincorporation of dUMP residues by DNA polymerase or due to deamination of cytosine. The protein is Uracil-DNA glycosylase of Brevibacillus brevis (strain 47 / JCM 6285 / NBRC 100599).